A 2149-amino-acid polypeptide reads, in one-letter code: Polyketide synthase 1 (2149 aa).

The tract at residues 19–261 is N-terminal acylcarrier protein transacylase domain (SAT); it reads FIFGDQSSCN…TRLAVHAPYH (243 aa). The 436-residue stretch at 394–829 folds into the Ketosynthase family 3 (KS3) domain; sequence ESKIAIIGMS…GGNTALLVED (436 aa). Residues C566, H701, and H745 each act as for beta-ketoacyl synthase activity in the active site. Residues 929–1233 are malonyl-CoA:ACP transacylase (MAT) domain; it reads AFVFSGQGSQ…PSLMRNKDGW (305 aa). S1018 serves as the catalytic For acyl/malonyl transferase activity. The product template (PT) domain stretch occupies residues 1310-1624; the sequence is TASVHRIVHE…RKVLNTAMPP (315 aa). The segment at 1314 to 1447 is N-terminal hotdog fold; it reads HRIVHESVDK…SSLHFERPKV (134 aa). Positions 1314 to 1619 constitute a PKS/mFAS DH domain; sequence HRIVHESVDK…FQGIPRKVLN (306 aa). H1346 (proton acceptor; for dehydratase activity) is an active-site residue. The tract at residues 1474 to 1619 is C-terminal hotdog fold; sequence LNSRMSSGVI…FQGIPRKVLN (146 aa). D1533 serves as the catalytic Proton donor; for dehydratase activity. Residues 1619 to 1657 form a disordered region; the sequence is NTAMPPPKSQNEAPVRSAPAKPAAKPPKSASSEHSGHFA. Over residues 1635–1650 the composition is skewed to low complexity; the sequence is SAPAKPAAKPPKSASS. The 75-residue stretch at 1678-1752 folds into the Carrier 1 domain; it reads RNPMLAVFKI…DLATHLGLDT (75 aa). Position 1712 is an O-(pantetheine 4'-phosphoryl)serine (S1712). Positions 1755–1790 are enriched in low complexity; the sequence is SDQSSGQSSSSGGLSPRSDSIGEITSSATTPPSLSP. Residues 1755 to 1796 form a disordered region; sequence SDQSSGQSSSSGGLSPRSDSIGEITSSATTPPSLSPRGSVSG. Residues 1793 to 1870 form the Carrier 2 domain; that stretch reads SVSGSQCKDV…SFKHMFQQGH (78 aa). S1830 is modified (O-(pantetheine 4'-phosphoryl)serine). Residues 1882–2147 form a thioesterase (TE) domain region; that stretch reads LKQYRATSTL…ERVAAFIRST (266 aa). S1973 serves as the catalytic For thioesterase activity.

Its function is as follows. Polyketide synthase; part of the Pks1 gene cluster that mediates the biosynthesis of an anthraquinone derivative pigment that contributes to conidial pigmentation that provides protection from UV radiation, heat and cold stress. The polyketide synthase Pks1 produces 1-acetyl-2,4,6,8-tetrahydroxy-9,10-anthraquinone though condensation of acetyl-CoA with malonyl-CoA. The dehydratase EthD and the laccase Mlac1 further convert the anthraquinone derivative into the final conidial pigment. This chain is Polyketide synthase 1, found in Metarhizium majus (strain ARSEF 297).